The following is a 372-amino-acid chain: Phospho-N-acetylmuramoyl-pentapeptide-transferase (372 aa).

Helical transmembrane passes span 25-45 (RSLL…PIMI), 73-93 (TMGG…WADL), 98-118 (VWIV…DDWI), 134-154 (FFWT…IATQ), 176-196 (SIPL…YLVI), 211-231 (GLAI…AYLS), 251-271 (LVVI…YNAH), 275-295 (VFMG…IAVM), 300-320 (IVFA…FLQI), and 349-369 (QVVI…LMTL).

The protein belongs to the glycosyltransferase 4 family. MraY subfamily. Mg(2+) is required as a cofactor.

It is found in the cell inner membrane. It carries out the reaction UDP-N-acetyl-alpha-D-muramoyl-L-alanyl-gamma-D-glutamyl-meso-2,6-diaminopimeloyl-D-alanyl-D-alanine + di-trans,octa-cis-undecaprenyl phosphate = di-trans,octa-cis-undecaprenyl diphospho-N-acetyl-alpha-D-muramoyl-L-alanyl-D-glutamyl-meso-2,6-diaminopimeloyl-D-alanyl-D-alanine + UMP. It functions in the pathway cell wall biogenesis; peptidoglycan biosynthesis. Functionally, catalyzes the initial step of the lipid cycle reactions in the biosynthesis of the cell wall peptidoglycan: transfers peptidoglycan precursor phospho-MurNAc-pentapeptide from UDP-MurNAc-pentapeptide onto the lipid carrier undecaprenyl phosphate, yielding undecaprenyl-pyrophosphoryl-MurNAc-pentapeptide, known as lipid I. This Acinetobacter baumannii (strain AB0057) protein is Phospho-N-acetylmuramoyl-pentapeptide-transferase.